The sequence spans 257 residues: Galactitol 2-dehydrogenase (257 aa).

NAD(+) contacts are provided by residues 21–23, 67–68, asparagine 94, tyrosine 162, and lysine 166; these read RAI and DV. Residue tyrosine 162 is the Proton acceptor of the active site.

Belongs to the short-chain dehydrogenases/reductases (SDR) family. In terms of assembly, homotetramer. Mg(2+) serves as cofactor.

The catalysed reaction is galactitol + NAD(+) = keto-D-tagatose + NADH + H(+). Its function is as follows. Catalyzes the oxidation of galactitol to D-tagatose. Also catalyzes the oxidation of a wide range of substrates, including polyvalent aliphatic alcohols and polyols, to the corresponding ketones and ketoses. Galactitol is the preferred substrate. The chain is Galactitol 2-dehydrogenase from Rhizobium johnstonii (strain DSM 114642 / LMG 32736 / 3841) (Rhizobium leguminosarum bv. viciae).